Reading from the N-terminus, the 312-residue chain is tRNA dimethylallyltransferase (312 aa).

10–17 is a binding site for ATP; sequence GPTGVGKT. 12 to 17 lines the substrate pocket; it reads TGVGKT.

This sequence belongs to the IPP transferase family. As to quaternary structure, monomer. Mg(2+) is required as a cofactor.

It carries out the reaction adenosine(37) in tRNA + dimethylallyl diphosphate = N(6)-dimethylallyladenosine(37) in tRNA + diphosphate. Functionally, catalyzes the transfer of a dimethylallyl group onto the adenine at position 37 in tRNAs that read codons beginning with uridine, leading to the formation of N6-(dimethylallyl)adenosine (i(6)A). This Coprothermobacter proteolyticus (strain ATCC 35245 / DSM 5265 / OCM 4 / BT) protein is tRNA dimethylallyltransferase.